The chain runs to 82 residues: Small ribosomal subunit protein bS16 (82 aa).

The protein belongs to the bacterial ribosomal protein bS16 family.

The chain is Small ribosomal subunit protein bS16 from Yersinia enterocolitica serotype O:8 / biotype 1B (strain NCTC 13174 / 8081).